The chain runs to 306 residues: NAD kinase 1 (306 aa).

Residue D67 is the Proton acceptor of the active site. NAD(+) is bound by residues 67 to 68, 149 to 150, and D181; these read DG and ND.

Belongs to the NAD kinase family. Requires a divalent metal cation as cofactor.

Its subcellular location is the cytoplasm. The catalysed reaction is NAD(+) + ATP = ADP + NADP(+) + H(+). Its function is as follows. Involved in the regulation of the intracellular balance of NAD and NADP, and is a key enzyme in the biosynthesis of NADP. Catalyzes specifically the phosphorylation on 2'-hydroxyl of the adenosine moiety of NAD to yield NADP. The sequence is that of NAD kinase 1 from Synechococcus sp. (strain ATCC 27144 / PCC 6301 / SAUG 1402/1) (Anacystis nidulans).